The sequence spans 225 residues: PKHD-type hydroxylase YbiX (225 aa).

Positions 78–177 (TLSTPLFNRY…RVASFMWIQS (100 aa)) constitute a Fe2OG dioxygenase domain. Residues His-96, Asp-98, and His-158 each contribute to the Fe cation site. 2-oxoglutarate is bound at residue Arg-168.

Fe(2+) is required as a cofactor. The cofactor is L-ascorbate.

The sequence is that of PKHD-type hydroxylase YbiX from Shigella sonnei (strain Ss046).